The sequence spans 261 residues: HTH-type transcriptional repressor CsqR (261 aa).

The 56-residue stretch at 8 to 63 folds into the HTH deoR-type domain; sequence GNPRHDQLLMLIAERGYMNIDELANLLDVSTQTVRRDIRKLSEQGLITRHHGGAGR. The H-T-H motif DNA-binding region spans 25–44; sequence MNIDELANLLDVSTQTVRRD.

As to quaternary structure, monomer in the absence of DNA. Exhibits a high level of cooperativity once it is bound to its target DNA.

With respect to regulation, inactivated in the presence of the effectors sulfoquinovose and sulfoquinovosyl glycerol, leading to the de-repression of the target genes. In terms of biological role, involved in the regulation of the sulfoquinovose operon. Represses the expression of the yihUTS operon and of the yihV and csqR genes. Binds DNA inside the spacer between the bidirectional transcription units comprising the yihUTS operon and the yihV gene, and upstream the csqR gene itself. This Escherichia coli (strain K12) protein is HTH-type transcriptional repressor CsqR.